Reading from the N-terminus, the 548-residue chain is Membrane protein insertase YidC (548 aa).

A helical membrane pass occupies residues N6–D26. Residues Q30–P53 form a disordered region. A run of 4 helical transmembrane segments spans residues K345–V365, L420–L440, L458–I478, and P499–V519.

This sequence belongs to the OXA1/ALB3/YidC family. Type 1 subfamily. As to quaternary structure, interacts with the Sec translocase complex via SecD. Specifically interacts with transmembrane segments of nascent integral membrane proteins during membrane integration.

The protein localises to the cell inner membrane. In terms of biological role, required for the insertion and/or proper folding and/or complex formation of integral membrane proteins into the membrane. Involved in integration of membrane proteins that insert both dependently and independently of the Sec translocase complex, as well as at least some lipoproteins. Aids folding of multispanning membrane proteins. This is Membrane protein insertase YidC from Erwinia tasmaniensis (strain DSM 17950 / CFBP 7177 / CIP 109463 / NCPPB 4357 / Et1/99).